A 217-amino-acid polypeptide reads, in one-letter code: 2-C-methyl-D-erythritol 4-phosphate cytidylyltransferase (217 aa).

This sequence belongs to the IspD/TarI cytidylyltransferase family. IspD subfamily.

It catalyses the reaction 2-C-methyl-D-erythritol 4-phosphate + CTP + H(+) = 4-CDP-2-C-methyl-D-erythritol + diphosphate. The protein operates within isoprenoid biosynthesis; isopentenyl diphosphate biosynthesis via DXP pathway; isopentenyl diphosphate from 1-deoxy-D-xylulose 5-phosphate: step 2/6. In terms of biological role, catalyzes the formation of 4-diphosphocytidyl-2-C-methyl-D-erythritol from CTP and 2-C-methyl-D-erythritol 4-phosphate (MEP). The polypeptide is 2-C-methyl-D-erythritol 4-phosphate cytidylyltransferase (Chlamydia abortus (strain DSM 27085 / S26/3) (Chlamydophila abortus)).